The following is a 422-amino-acid chain: MRLQIKDIKIIDPLQNRDLIGDIFVENGRIVSKFLGDADKVVDGRGKIAVPGLIDIHSHLREPGEERKETIYTGTRSAAKGGITTVFCMPNTKPVIDNAPTVEFVLLKAQKEGLVNVLPIGCATKGSHGVEISEIGVLKKAGIVAVSDDGLPIANSQIMRRTLEYTKMFKLPVISHGEDKELSKNGVMNEGKNSMILGLRGIPKQAEEVIISRDIMLAELTEGYLHIAHVSTAGSVELIRQAKKKSIKVTAETCPHYFTLTDDIVKGYNTNTKMNPPLRRQEDVDAIKQGLADGTIDCIATDHAPHMEEEKNREFDLAPFGIIGFETILSLILNELVDSGVLSLSKALSKMTSNPAKIFNLEGRGTLKEGNIADITIIDMKYSYEFKKENIVSKSKNSPFIGRKFKGGAVMTIVGGNIVWQV.

Zn(2+)-binding residues include His57 and His59. Substrate is bound by residues 59 to 61 (HLR) and Asn91. Residues Asp149, His176, and His229 each coordinate Zn(2+). Substrate is bound at residue Asn275. Residue Asp302 coordinates Zn(2+). Asp302 is an active-site residue. Substrate-binding positions include His306 and 320 to 321 (FG).

The protein belongs to the metallo-dependent hydrolases superfamily. DHOase family. Class I DHOase subfamily. Requires Zn(2+) as cofactor.

It carries out the reaction (S)-dihydroorotate + H2O = N-carbamoyl-L-aspartate + H(+). It participates in pyrimidine metabolism; UMP biosynthesis via de novo pathway; (S)-dihydroorotate from bicarbonate: step 3/3. Catalyzes the reversible cyclization of carbamoyl aspartate to dihydroorotate. The chain is Dihydroorotase from Endomicrobium trichonymphae.